Consider the following 343-residue polypeptide: Holliday junction branch migration complex subunit RuvB (343 aa).

Positions 1–185 (MEQEDFNIRE…FGINLHLEYY (185 aa)) are large ATPase domain (RuvB-L). ATP-binding positions include Leu24, Arg25, Gly66, Lys69, Thr70, Thr71, 132-134 (EDY), Arg175, Tyr185, and Arg222. Thr70 is a Mg(2+) binding site. The small ATPAse domain (RuvB-S) stretch occupies residues 186-256 (DDDILSNIIR…IAQFALEALN (71 aa)). The segment at 259–343 (KYGLDEIDNK…YSSQKTLFND (85 aa)) is head domain (RuvB-H). Residues Arg314 and Arg319 each contribute to the DNA site.

The protein belongs to the RuvB family. In terms of assembly, homohexamer. Forms an RuvA(8)-RuvB(12)-Holliday junction (HJ) complex. HJ DNA is sandwiched between 2 RuvA tetramers; dsDNA enters through RuvA and exits via RuvB. An RuvB hexamer assembles on each DNA strand where it exits the tetramer. Each RuvB hexamer is contacted by two RuvA subunits (via domain III) on 2 adjacent RuvB subunits; this complex drives branch migration. In the full resolvosome a probable DNA-RuvA(4)-RuvB(12)-RuvC(2) complex forms which resolves the HJ.

The protein resides in the cytoplasm. The catalysed reaction is ATP + H2O = ADP + phosphate + H(+). In terms of biological role, the RuvA-RuvB-RuvC complex processes Holliday junction (HJ) DNA during genetic recombination and DNA repair, while the RuvA-RuvB complex plays an important role in the rescue of blocked DNA replication forks via replication fork reversal (RFR). RuvA specifically binds to HJ cruciform DNA, conferring on it an open structure. The RuvB hexamer acts as an ATP-dependent pump, pulling dsDNA into and through the RuvAB complex. RuvB forms 2 homohexamers on either side of HJ DNA bound by 1 or 2 RuvA tetramers; 4 subunits per hexamer contact DNA at a time. Coordinated motions by a converter formed by DNA-disengaged RuvB subunits stimulates ATP hydrolysis and nucleotide exchange. Immobilization of the converter enables RuvB to convert the ATP-contained energy into a lever motion, pulling 2 nucleotides of DNA out of the RuvA tetramer per ATP hydrolyzed, thus driving DNA branch migration. The RuvB motors rotate together with the DNA substrate, which together with the progressing nucleotide cycle form the mechanistic basis for DNA recombination by continuous HJ branch migration. Branch migration allows RuvC to scan DNA until it finds its consensus sequence, where it cleaves and resolves cruciform DNA. This chain is Holliday junction branch migration complex subunit RuvB, found in Bacteroides thetaiotaomicron (strain ATCC 29148 / DSM 2079 / JCM 5827 / CCUG 10774 / NCTC 10582 / VPI-5482 / E50).